The chain runs to 435 residues: Divergent protein kinase domain 2B (435 aa).

Residues 1 to 33 (MESQWRGAAATAFHQHWLARLLLWVSTLSCSFS) form the signal peptide. N-linked (GlcNAc...) asparagine glycosylation is found at N102 and N395.

It belongs to the DIPK family.

The protein localises to the secreted. The polypeptide is Divergent protein kinase domain 2B (Dipk2b) (Mus musculus (Mouse)).